Here is a 218-residue protein sequence, read N- to C-terminus: Thiopurine S-methyltransferase (218 aa).

The S-adenosyl-L-methionine site is built by tryptophan 11, leucine 46, glutamate 67, and arginine 122.

This sequence belongs to the class I-like SAM-binding methyltransferase superfamily. TPMT family.

Its subcellular location is the cytoplasm. The enzyme catalyses S-adenosyl-L-methionine + a thiopurine = S-adenosyl-L-homocysteine + a thiopurine S-methylether.. The polypeptide is Thiopurine S-methyltransferase (Vibrio cholerae serotype O1 (strain ATCC 39541 / Classical Ogawa 395 / O395)).